The chain runs to 305 residues: UDP-3-O-acyl-N-acetylglucosamine deacetylase (305 aa).

H78, H235, and D239 together coordinate Zn(2+). H262 acts as the Proton donor in catalysis.

The protein belongs to the LpxC family. It depends on Zn(2+) as a cofactor.

The enzyme catalyses a UDP-3-O-[(3R)-3-hydroxyacyl]-N-acetyl-alpha-D-glucosamine + H2O = a UDP-3-O-[(3R)-3-hydroxyacyl]-alpha-D-glucosamine + acetate. Its pathway is glycolipid biosynthesis; lipid IV(A) biosynthesis; lipid IV(A) from (3R)-3-hydroxytetradecanoyl-[acyl-carrier-protein] and UDP-N-acetyl-alpha-D-glucosamine: step 2/6. Functionally, catalyzes the hydrolysis of UDP-3-O-myristoyl-N-acetylglucosamine to form UDP-3-O-myristoylglucosamine and acetate, the committed step in lipid A biosynthesis. The protein is UDP-3-O-acyl-N-acetylglucosamine deacetylase of Citrifermentans bemidjiense (strain ATCC BAA-1014 / DSM 16622 / JCM 12645 / Bem) (Geobacter bemidjiensis).